Here is a 1015-residue protein sequence, read N- to C-terminus: DNA polymerase catalytic subunit (1015 aa).

It belongs to the DNA polymerase type-B family. As to quaternary structure, forms a complex with the major DNA-binding protein BALF2, the DNA polymerase processivity factor BMRF1, and the alkaline exonuclease BGLF5. Interacts with the putative helicase-primase complex composed of BBLF4, BSLF1 and BBLF2/3 proteins; these interactions may coordinate leading and lagging strand DNA synthesis at the replication fork.

The protein localises to the host nucleus. It catalyses the reaction DNA(n) + a 2'-deoxyribonucleoside 5'-triphosphate = DNA(n+1) + diphosphate. In terms of biological role, replicates viral genomic DNA in the late phase of lytic infection, producing long concatemeric DNA. The replication complex is composed of six viral proteins: the DNA polymerase, processivity factor, primase, primase-associated factor, helicase, and ssDNA-binding protein. In Homo sapiens (Human), this protein is DNA polymerase catalytic subunit.